The primary structure comprises 451 residues: Probable NADH dehydrogenase (451 aa).

41 to 71 (KLIILGCGWGSYSFLKNLNSIKYDITVISPR) contacts FAD. 199–236 (LSFVIVGGGATGIEFTSELNDFFSEDLSRLFPFVPVNE) contributes to the NAD(+) binding site.

Belongs to the NADH dehydrogenase family. FAD is required as a cofactor.

It carries out the reaction a ubiquinone + NADH + 5 H(+)(in) = a ubiquinol + NAD(+) + 4 H(+)(out). The protein is Probable NADH dehydrogenase of Dictyostelium discoideum (Social amoeba).